Reading from the N-terminus, the 209-residue chain is Shikimate kinase (209 aa).

Residue 47-52 (GAGKTT) coordinates ATP. Position 51 (Thr-51) interacts with Mg(2+). Positions 69, 93, and 115 each coordinate substrate. Residue Arg-153 coordinates ATP. Arg-172 lines the substrate pocket.

Belongs to the shikimate kinase family. As to quaternary structure, monomer. Requires Mg(2+) as cofactor.

It localises to the cytoplasm. It carries out the reaction shikimate + ATP = 3-phosphoshikimate + ADP + H(+). Its pathway is metabolic intermediate biosynthesis; chorismate biosynthesis; chorismate from D-erythrose 4-phosphate and phosphoenolpyruvate: step 5/7. Catalyzes the specific phosphorylation of the 3-hydroxyl group of shikimic acid using ATP as a cosubstrate. This chain is Shikimate kinase, found in Bordetella avium (strain 197N).